Here is a 271-residue protein sequence, read N- to C-terminus: Ferric enterobactin transport ATP-binding protein FepC (271 aa).

The 237-residue stretch at 8–244 (LRGEQLTLGY…ELIERIYGLR (237 aa)) folds into the ABC transporter domain. 40 to 47 (GPNGCGKS) provides a ligand contact to ATP.

It belongs to the ABC transporter superfamily. In terms of assembly, the complex is composed of two ATP-binding proteins (FepC), two transmembrane proteins (FepD and FepG) and a solute-binding protein (FepB).

Its subcellular location is the cell inner membrane. It carries out the reaction Fe(III)-enterobactin(out) + ATP + H2O = Fe(III)-enterobactin(in) + ADP + phosphate + H(+). Part of the ABC transporter complex FepBDGC involved in ferric enterobactin uptake. Responsible for energy coupling to the transport system. The sequence is that of Ferric enterobactin transport ATP-binding protein FepC (fepC) from Escherichia coli (strain K12).